The sequence spans 108 residues: Cell division protein FtsL (108 aa).

Over Met1–Arg24 the chain is Cytoplasmic. A helical membrane pass occupies residues Leu25 to His45. At Asn46 to Arg108 the chain is on the periplasmic side.

It belongs to the FtsL family. As to quaternary structure, part of a complex composed of FtsB, FtsL and FtsQ.

The protein resides in the cell inner membrane. Essential cell division protein. May link together the upstream cell division proteins, which are predominantly cytoplasmic, with the downstream cell division proteins, which are predominantly periplasmic. The chain is Cell division protein FtsL from Aliivibrio fischeri (strain ATCC 700601 / ES114) (Vibrio fischeri).